We begin with the raw amino-acid sequence, 33 residues long: Brevinin-2PTe (33 aa).

C27 and C33 are oxidised to a cystine.

Expressed by the skin glands.

It is found in the secreted. Its function is as follows. Has antibacterial activity against the Gram-positive bacterium S.aureus ATCC 25923 (MIC=36 uM) and the Gram-negative bacterium E.coli ATCC 25726 (MIC=18 uM). This chain is Brevinin-2PTe, found in Pulchrana picturata (Malaysian fire frog).